We begin with the raw amino-acid sequence, 513 residues long: TRAF3-interacting JNK-activating modulator (513 aa).

Disordered stretches follow at residues 1–96, 130–171, and 381–402; these read MISS…GQVS, SSGI…KAEE, and SLQGDGEQQSSETQDLQDQLKK. Over 1 to 485 the chain is Cytoplasmic; the sequence is MISSDSRSSP…QLQVKENELQ (485 aa). Composition is skewed to basic and acidic residues over residues 17-31 and 69-79; these read ESYEAKCERRQETRE and RNLEEEKKGQA. Positions 266–488 form a coiled coil; that stretch reads MKKVLLEMED…VKENELQCGQ (223 aa). A compositionally biased stretch (polar residues) spans 386–397; sequence GEQQSSETQDLQ. A helical; Anchor for type IV membrane protein transmembrane segment spans residues 486 to 506; it reads CGQWLPVLMVVIATALAVFLA. The Extracellular portion of the chain corresponds to 507–513; the sequence is NKGNLVI.

In terms of assembly, interacts (via its coiled-coil domain) with TRAF3 (via isoleucine zipper). Interacts with MAP2K1. Interacts with PPP2CA; this interaction targets PPP2CA to the lysosomes. Interacts with MAVS. Interacts with TBK1. As to expression, expressed in bone marrow, spleen and thymus. Not detected in heart, kidney and liver.

It is found in the cell membrane. The protein localises to the golgi apparatus membrane. Its subcellular location is the lysosome membrane. The protein resides in the mitochondrion outer membrane. Its function is as follows. Adapter protein that plays essential roles in both innate and adaptive immunity. Plays a crucial role in the regulation of thymocyte development. Mechanistically, mediates TCR-stimulated activation through recruiting MAP2K1/MEK1 to the Golgi and, thereby, facilitating the interaction of MAP2K1/MEK1 with its activator BRAF. Also plays an essential role in regulatory T-cell stability and function by recruiting the serine-threonine phosphatase catalytic subunit (PPP2CA) to the lysosome, thereby facilitating the interaction of PP2Ac with the mTORC1 component RPTOR and restricting glycolytic metabolism. Positively regulates TLR4 signaling activity in macrophage-mediated inflammation by acting as a molecular clamp to facilitate LPS-induced translocation of TLR4 to lipid rafts. In response to viral infection, facilitates the recruitment of TRAF3 to MAVS within mitochondria leading to IRF3 activation and interferon production. However, participates in the maintenance of immune homeostasis and the prevention of overzealous innate immunity by promoting 'Lys-48'-dependent ubiquitination of TBK1. In Mus musculus (Mouse), this protein is TRAF3-interacting JNK-activating modulator (Traf3ip3).